The sequence spans 89 residues: Small ribosomal subunit protein uS15 (89 aa).

This sequence belongs to the universal ribosomal protein uS15 family. As to quaternary structure, part of the 30S ribosomal subunit. Forms a bridge to the 50S subunit in the 70S ribosome, contacting the 23S rRNA.

Its function is as follows. One of the primary rRNA binding proteins, it binds directly to 16S rRNA where it helps nucleate assembly of the platform of the 30S subunit by binding and bridging several RNA helices of the 16S rRNA. Forms an intersubunit bridge (bridge B4) with the 23S rRNA of the 50S subunit in the ribosome. In Bacteroides thetaiotaomicron (strain ATCC 29148 / DSM 2079 / JCM 5827 / CCUG 10774 / NCTC 10582 / VPI-5482 / E50), this protein is Small ribosomal subunit protein uS15.